The primary structure comprises 187 residues: GTP cyclohydrolase 1 (187 aa).

Residues C81, H84, and C152 each coordinate Zn(2+).

This sequence belongs to the GTP cyclohydrolase I family. As to quaternary structure, toroid-shaped homodecamer, composed of two pentamers of five dimers.

It carries out the reaction GTP + H2O = 7,8-dihydroneopterin 3'-triphosphate + formate + H(+). It participates in cofactor biosynthesis; 7,8-dihydroneopterin triphosphate biosynthesis; 7,8-dihydroneopterin triphosphate from GTP: step 1/1. This Pyrobaculum aerophilum (strain ATCC 51768 / DSM 7523 / JCM 9630 / CIP 104966 / NBRC 100827 / IM2) protein is GTP cyclohydrolase 1.